A 216-amino-acid polypeptide reads, in one-letter code: N-glycosylase/DNA lyase (216 aa).

The 8-oxoguanine site is built by Q27, S48, and W59. The segment at 106–170 (EHYYENMVAL…LDYRLKKINP (65 aa)) is helix-hairpin-helix. Catalysis depends on K130, which acts as the Schiff-base intermediate with DNA. F134 and P160 together coordinate 8-oxoguanine. D162 is an active-site residue. Residues D190 and W194 each contribute to the 8-oxoguanine site.

The protein belongs to the archaeal N-glycosylase/DNA lyase (AGOG) family.

It carries out the reaction 2'-deoxyribonucleotide-(2'-deoxyribose 5'-phosphate)-2'-deoxyribonucleotide-DNA = a 3'-end 2'-deoxyribonucleotide-(2,3-dehydro-2,3-deoxyribose 5'-phosphate)-DNA + a 5'-end 5'-phospho-2'-deoxyribonucleoside-DNA + H(+). Functionally, DNA repair enzyme that is part of the base excision repair (BER) pathway; protects from oxidative damage by removing the major product of DNA oxidation, 8-oxoguanine (GO), from single- and double-stranded DNA substrates. The protein is N-glycosylase/DNA lyase of Nanoarchaeum equitans (strain Kin4-M).